Reading from the N-terminus, the 428-residue chain is Succinyl-CoA--L-malate CoA-transferase alpha subunit (428 aa).

Residues 1-31 are disordered; it reads MPPTGEEPSGHAESKPPASDPMSTPGTGQEQ. Residues 21–31 are compositionally biased toward polar residues; sequence PMSTPGTGQEQ. Catalysis depends on D200, which acts as the Nucleophile.

The protein belongs to the CoA-transferase III family. Forms a large complex composed of six heterodimers (alpha, beta).

The catalysed reaction is succinyl-CoA + (S)-malate = (S)-malyl-CoA + succinate. It catalyses the reaction (3S)-citramalate + succinyl-CoA = (3S)-citramalyl-CoA + succinate. Its function is as follows. Involved in the 3-hydroxypropionate cycle used for autotrophic carbon dioxide fixation. Catalyzes the transfer of CoA moiety from succinyl-CoA to L-malate to yield L-malyl-CoA. It is highly specific for succinyl-CoA as the CoA donor, however it can accept L-citramalate instead of L-malate as the CoA acceptor. The protein is Succinyl-CoA--L-malate CoA-transferase alpha subunit (smtA) of Chloroflexus aurantiacus.